Consider the following 84-residue polypeptide: Toxin Tf2 (84 aa).

The N-terminal stretch at 1–20 (MKRFLLFISILMMIGTIVVG) is a signal peptide. The LCN-type CS-alpha/beta domain occupies 21 to 83 (KEGYAMDHEG…VWDYATNKCG (63 aa)). Cystine bridges form between cysteine 31–cysteine 82, cysteine 35–cysteine 58, cysteine 43–cysteine 63, and cysteine 47–cysteine 65. Cysteine 82 is subject to Cysteine amide.

The protein belongs to the long (4 C-C) scorpion toxin superfamily. Sodium channel inhibitor family. Beta subfamily. Contains 4 disulfide bonds. As to expression, expressed by the venom gland.

Its subcellular location is the secreted. Functionally, beta toxins bind voltage-independently at site-4 of sodium channels (Nav) and shift the voltage of activation toward more negative potentials thereby affecting sodium channel activation and promoting spontaneous and repetitive firing. This toxin is active against hNav1.3/SCN3A. The protein is Toxin Tf2 of Tityus fasciolatus (Central Brazilian scorpion).